The following is a 126-amino-acid chain: UPF0235 protein C15orf40 homolog (126 aa).

Residues 1 to 33 (MPKKAGATSKGKNQTKEPETPPPPTGPVATDSK) form a disordered region. S89 is subject to Phosphoserine.

This sequence belongs to the UPF0235 family.

This is UPF0235 protein C15orf40 homolog from Rattus norvegicus (Rat).